Here is a 322-residue protein sequence, read N- to C-terminus: Serine/threonine-protein phosphatase PP1-2 (322 aa).

Asp60, His62, Asp88, and Asn120 together coordinate Mn(2+). Residue His121 is the Proton donor of the active site. Mn(2+)-binding residues include His169 and His244. The segment at 298-322 (RQRVSQSSIKESKSATNSLKKSKNN) is disordered. Over residues 301-316 (VSQSSIKESKSATNSL) the composition is skewed to polar residues.

Belongs to the PPP phosphatase family. PP-1 subfamily. Mn(2+) is required as a cofactor.

It carries out the reaction O-phospho-L-seryl-[protein] + H2O = L-seryl-[protein] + phosphate. The enzyme catalyses O-phospho-L-threonyl-[protein] + H2O = L-threonyl-[protein] + phosphate. Functionally, essential role in cell cycle control. PP1 is perhaps required for exit from mitosis. This Schizosaccharomyces pombe (strain 972 / ATCC 24843) (Fission yeast) protein is Serine/threonine-protein phosphatase PP1-2 (sds21).